The primary structure comprises 350 residues: S-adenosylmethionine:tRNA ribosyltransferase-isomerase (350 aa).

This sequence belongs to the QueA family. In terms of assembly, monomer.

Its subcellular location is the cytoplasm. The enzyme catalyses 7-aminomethyl-7-carbaguanosine(34) in tRNA + S-adenosyl-L-methionine = epoxyqueuosine(34) in tRNA + adenine + L-methionine + 2 H(+). It participates in tRNA modification; tRNA-queuosine biosynthesis. In terms of biological role, transfers and isomerizes the ribose moiety from AdoMet to the 7-aminomethyl group of 7-deazaguanine (preQ1-tRNA) to give epoxyqueuosine (oQ-tRNA). This chain is S-adenosylmethionine:tRNA ribosyltransferase-isomerase, found in Bacillus mycoides (strain KBAB4) (Bacillus weihenstephanensis).